Here is a 292-residue protein sequence, read N- to C-terminus: 4-hydroxy-tetrahydrodipicolinate synthase (292 aa).

Threonine 45 is a pyruvate binding site. Tyrosine 133 serves as the catalytic Proton donor/acceptor. Catalysis depends on lysine 161, which acts as the Schiff-base intermediate with substrate. Isoleucine 203 provides a ligand contact to pyruvate.

This sequence belongs to the DapA family. Homotetramer; dimer of dimers.

The protein localises to the cytoplasm. The catalysed reaction is L-aspartate 4-semialdehyde + pyruvate = (2S,4S)-4-hydroxy-2,3,4,5-tetrahydrodipicolinate + H2O + H(+). The protein operates within amino-acid biosynthesis; L-lysine biosynthesis via DAP pathway; (S)-tetrahydrodipicolinate from L-aspartate: step 3/4. In terms of biological role, catalyzes the condensation of (S)-aspartate-beta-semialdehyde [(S)-ASA] and pyruvate to 4-hydroxy-tetrahydrodipicolinate (HTPA). In Klebsiella pneumoniae subsp. pneumoniae (strain ATCC 700721 / MGH 78578), this protein is 4-hydroxy-tetrahydrodipicolinate synthase.